The primary structure comprises 232 residues: Enolase-phosphatase E1 (232 aa).

It belongs to the HAD-like hydrolase superfamily. MasA/MtnC family. Monomer. The cofactor is Mg(2+).

The catalysed reaction is 5-methylsulfanyl-2,3-dioxopentyl phosphate + H2O = 1,2-dihydroxy-5-(methylsulfanyl)pent-1-en-3-one + phosphate. Its pathway is amino-acid biosynthesis; L-methionine biosynthesis via salvage pathway; L-methionine from S-methyl-5-thio-alpha-D-ribose 1-phosphate: step 3/6. It functions in the pathway amino-acid biosynthesis; L-methionine biosynthesis via salvage pathway; L-methionine from S-methyl-5-thio-alpha-D-ribose 1-phosphate: step 4/6. In terms of biological role, bifunctional enzyme that catalyzes the enolization of 2,3-diketo-5-methylthiopentyl-1-phosphate (DK-MTP-1-P) into the intermediate 2-hydroxy-3-keto-5-methylthiopentenyl-1-phosphate (HK-MTPenyl-1-P), which is then dephosphorylated to form the acireductone 1,2-dihydroxy-3-keto-5-methylthiopentene (DHK-MTPene). This Sorangium cellulosum (strain So ce56) (Polyangium cellulosum (strain So ce56)) protein is Enolase-phosphatase E1.